Here is a 409-residue protein sequence, read N- to C-terminus: Alpha-1-antitrypsin (409 aa).

The N-terminal stretch at 1–15 is a signal peptide; that stretch reads LLLAGLCCLLPGSLA. The segment at 18 to 39 is disordered; the sequence is PQGDAAQKTDTPPHDQNHPTLN. Residues Asn61, Asn98, Asn136, and Asn262 are each glycosylated (N-linked (GlcNAc...) asparagine). Residues 364–383 form an RCL region; it reads GAMFLEAIPMSIPPEVKFNK. Ser374 bears the Phosphoserine mark.

This sequence belongs to the serpin family. Interacts with CELA2A. Interacts with ERGIC3 and LMAN1/ERGIC53. Interacts with PRSS1/Trypsin. In terms of tissue distribution, plasma.

It is found in the secreted. Its function is as follows. Inhibitor of serine proteases. Its primary target is elastase, but it also has a moderate affinity for plasmin and thrombin. Inhibits trypsin, chymotrypsin and plasminogen activator. This chain is Alpha-1-antitrypsin (SERPINA1), found in Papio anubis (Olive baboon).